The primary structure comprises 878 residues: Phosphoenolpyruvate carboxylase (878 aa).

Residues histidine 140 and lysine 545 contribute to the active site.

It belongs to the PEPCase type 1 family. Requires Mg(2+) as cofactor.

The enzyme catalyses oxaloacetate + phosphate = phosphoenolpyruvate + hydrogencarbonate. In terms of biological role, forms oxaloacetate, a four-carbon dicarboxylic acid source for the tricarboxylic acid cycle. This chain is Phosphoenolpyruvate carboxylase, found in Pseudomonas aeruginosa (strain ATCC 15692 / DSM 22644 / CIP 104116 / JCM 14847 / LMG 12228 / 1C / PRS 101 / PAO1).